The following is a 397-amino-acid chain: MVVKKTFVLSTLILISVVALVSTAVYTSGNVTFYSPSVNNQIYYVGKSVTIDAVVPQQFAGQGAVINLFFPNSTLAASIPTTVNATGGIYVPNAYTFPHVIGIWQITVEVTGGVAVGTIDVNVTTPAVAPIILTLQNLAMYENTYPQFIEFANGIITSVVMQNGTVNIMGYVYNSTVGPLSGATVSLTLNIPTVGTKTLSTTTASNGSFMLSFQVPQLSTTLTLISSYLISGSLTVSYGVHTVTYNVFITAIPNYLSVINALNNEVSTLRSEISSLNSTIASLNKSLANANTQISNLQSEITTLNSEIGKLNSTVGSLSTQLSSLSSQYNTLSSQVTALNGKISNLSTSLSTLNGEVASLRSTVSSLTTIAYGGIIAGIIGLIVAIVAIVLVMRRIS.

The signal sequence occupies residues Met-1–Ala-24. Positions Ile-259–Thr-314 form a coiled coil. The helical transmembrane segment at Gly-373–Met-393 threads the bilayer.

It belongs to the Sulfolobales SlaB family. The mushroom-shaped unit cells of the Sulfolobales' S-layers may consist of three SlaB subunits and six SlaA subunits.

The protein localises to the secreted. Its subcellular location is the cell wall. The protein resides in the S-layer. It is found in the cell membrane. Its function is as follows. S-layer small protein. May anchor the complex to the cell membrane. This chain is S-layer protein B, found in Saccharolobus solfataricus (strain ATCC 35092 / DSM 1617 / JCM 11322 / P2) (Sulfolobus solfataricus).